The sequence spans 135 residues: Small ribosomal subunit protein uS8 (135 aa).

The protein belongs to the universal ribosomal protein uS8 family. As to quaternary structure, part of the 30S ribosomal subunit. Contacts proteins S5 and S12.

Its function is as follows. One of the primary rRNA binding proteins, it binds directly to 16S rRNA central domain where it helps coordinate assembly of the platform of the 30S subunit. This is Small ribosomal subunit protein uS8 from Parafrankia sp. (strain EAN1pec).